The sequence spans 263 residues: MNEGDVLVVGGTSDARALCRQLDAANVAYTLSVATPAGKALAGDIKGQVRCGRLEYGQMVAWLKENRTRWVIDASHPYAEMVSHNLLRACETAGVLLSRYQRPEQLSNLTHPLLYTARSIADACEIARRFGPRVLLTTGSKDLAVWRAGLAEKTLLARVLPVAEVIQRCSELGFGVGEIFALCGPFSADFNAAFYHQCRADVVITKASGAEGGYQEKVQPCLDAGIPCIVIARPTPLVTGDELLESQAAFAQRLSRWLAAAKE.

Belongs to the precorrin-6x reductase family.

The enzyme catalyses Co-precorrin-6B + NAD(+) = Co-precorrin-6A + NADH + H(+). It participates in cofactor biosynthesis; adenosylcobalamin biosynthesis; cob(II)yrinate a,c-diamide from sirohydrochlorin (anaerobic route): step 7/10. In terms of biological role, catalyzes the reduction of the macrocycle of cobalt-precorrin-6A to cobalt-precorrin-6B. The sequence is that of Cobalt-precorrin-6A reductase (cbiJ) from Salmonella typhimurium (strain LT2 / SGSC1412 / ATCC 700720).